The sequence spans 344 residues: Geranylgeranyl pyrophosphate synthase 10, mitochondrial (344 aa).

Residues 1-40 (MENREVFVYIVISIFRSLQFLFWRFRPRYNDVTSALTRPL) constitute a mitochondrion transit peptide. Positions 91, 94, and 123 each coordinate isopentenyl diphosphate. Mg(2+)-binding residues include D130 and D136. Residue R141 participates in dimethylallyl diphosphate binding. An isopentenyl diphosphate-binding site is contributed by R142. Positions 229, 230, 267, 284, and 294 each coordinate dimethylallyl diphosphate.

This sequence belongs to the FPP/GGPP synthase family. In terms of assembly, monomer. Mg(2+) is required as a cofactor.

The protein localises to the mitochondrion. It carries out the reaction isopentenyl diphosphate + dimethylallyl diphosphate = (2E)-geranyl diphosphate + diphosphate. It catalyses the reaction isopentenyl diphosphate + (2E)-geranyl diphosphate = (2E,6E)-farnesyl diphosphate + diphosphate. The catalysed reaction is isopentenyl diphosphate + (2E,6E)-farnesyl diphosphate = (2E,6E,10E)-geranylgeranyl diphosphate + diphosphate. Its pathway is isoprenoid biosynthesis; farnesyl diphosphate biosynthesis; farnesyl diphosphate from geranyl diphosphate and isopentenyl diphosphate: step 1/1. The protein operates within isoprenoid biosynthesis; geranyl diphosphate biosynthesis; geranyl diphosphate from dimethylallyl diphosphate and isopentenyl diphosphate: step 1/1. It functions in the pathway isoprenoid biosynthesis; geranylgeranyl diphosphate biosynthesis; geranylgeranyl diphosphate from farnesyl diphosphate and isopentenyl diphosphate: step 1/1. Catalyzes the trans-addition of the three molecules of IPP onto DMAPP to form geranylgeranyl pyrophosphate. The polypeptide is Geranylgeranyl pyrophosphate synthase 10, mitochondrial (Arabidopsis thaliana (Mouse-ear cress)).